A 419-amino-acid chain; its full sequence is MNDKPNKWIFIPILAILFVMIGYQYVCPAGGQACHFRTGDKLVRIAPLATPDPTTDDLYREQDPEEDNPPKCASKFNFTERDLTRDVDFNIKGDDVIVFLHIQKTGGTTFGRHLVRNIRLEQPCDCKAGQKKCTCHRPGKQESWLFSRFSTGWSCGLHADWTELTNCVPVIMDKRQPPKRKRNFYYITMLRDPVSRYLSEWKHVQRGATWKTSLHMCDGRSPTQDELPTCYNGDDWSGVTLHDFMDCPSNLANNRQVRMLADLSLVGCYNLSTMNESERNPILLASAKSNLKNMAFYGLTEFQRKTQYLFERTFHLRFISAFTQINSTRAANVELRDDMRSRIEQLNMLDMQLYEFAKDLFLQRYQFVRQRERQEERLKRREERRWIRERRVNQSKEPIVENQTRVTTTEDYASQVVRW.

The Cytoplasmic portion of the chain corresponds to 1-7; the sequence is MNDKPNK. The chain crosses the membrane as a helical; Signal-anchor for type II membrane protein span at residues 8-28; sequence WIFIPILAILFVMIGYQYVCP. The Lumenal segment spans residues 29 to 419; it reads AGGQACHFRT…EDYASQVVRW (391 aa). Asn-77 carries N-linked (GlcNAc...) asparagine glycosylation. 101-109 lines the 3'-phosphoadenylyl sulfate pocket; sequence HIQKTGGTT. Residues 131 to 132, Arg-148, Trp-153, and His-158 each bind substrate; that span reads KK. His-158 functions as the Proton acceptor in the catalytic mechanism. 2 residues coordinate 3'-phosphoadenylyl sulfate: Arg-191 and Ser-199. Substrate contacts are provided by His-203 and Trp-210. N-linked (GlcNAc...) asparagine glycans are attached at residues Asn-270 and Asn-275. Residue 323–325 participates in 3'-phosphoadenylyl sulfate binding; sequence TQI. Asn-326 carries an N-linked (GlcNAc...) asparagine glycan. A 3'-phosphoadenylyl sulfate-binding site is contributed by 329–330; that stretch reads RA. N-linked (GlcNAc...) asparagine glycans are attached at residues Asn-393 and Asn-402.

This sequence belongs to the sulfotransferase 6 family. As to expression, in early somitogenesis, expressed in presumptive forebrain and midbrain, tail bud and Kupffer's vesicle. During mid-somitogenesis, ubiquitous expression which is strongest in the somites and eye. During late somitogenesis, predominantly expressed in eye, hindbrain and ventral somites. At 24 hours post-fertilization (hpf), restricted to lens and neural retina, brain, otic vesicle and somites. At 36 hpf, brain expression is restricted to telencephalon. At 48 hpf, restricted to telencephalon and pectoral fin.

It localises to the membrane. It catalyses the reaction alpha-D-glucosaminyl-[heparan sulfate](n) + 3'-phosphoadenylyl sulfate = 6-sulfo-alpha-D-glucosaminyl-[heparan sulfate](n) + adenosine 3',5'-bisphosphate + H(+). Its function is as follows. 6-O-sulfation enzyme which catalyzes the transfer of sulfate from 3'-phosphoadenosine 5'-phosphosulfate (PAPS) to position 6 of the N-sulfoglucosamine residue (GlcNS) of heparan sulfate. This Danio rerio (Zebrafish) protein is Heparan-sulfate 6-O-sulfotransferase 3-B.